A 481-amino-acid chain; its full sequence is Alkaline protease secretion protein AprF (481 aa).

The disordered stretch occupies residues P462–N481. The segment covering S469 to N481 has biased composition (basic and acidic residues).

Belongs to the outer membrane factor (OMF) (TC 1.B.17) family.

The protein resides in the cell outer membrane. In terms of biological role, involved in the secretion of alkaline protease. The chain is Alkaline protease secretion protein AprF (aprF) from Pseudomonas aeruginosa (strain ATCC 15692 / DSM 22644 / CIP 104116 / JCM 14847 / LMG 12228 / 1C / PRS 101 / PAO1).